The primary structure comprises 513 residues: ATP synthase subunit alpha (513 aa).

Position 169 to 176 (glycine 169 to threonine 176) interacts with ATP.

The protein belongs to the ATPase alpha/beta chains family. As to quaternary structure, F-type ATPases have 2 components, CF(1) - the catalytic core - and CF(0) - the membrane proton channel. CF(1) has five subunits: alpha(3), beta(3), gamma(1), delta(1), epsilon(1). CF(0) has three main subunits: a(1), b(2) and c(9-12). The alpha and beta chains form an alternating ring which encloses part of the gamma chain. CF(1) is attached to CF(0) by a central stalk formed by the gamma and epsilon chains, while a peripheral stalk is formed by the delta and b chains.

Its subcellular location is the cell inner membrane. It carries out the reaction ATP + H2O + 4 H(+)(in) = ADP + phosphate + 5 H(+)(out). Produces ATP from ADP in the presence of a proton gradient across the membrane. The alpha chain is a regulatory subunit. The polypeptide is ATP synthase subunit alpha (Bordetella bronchiseptica (strain ATCC BAA-588 / NCTC 13252 / RB50) (Alcaligenes bronchisepticus)).